A 265-amino-acid chain; its full sequence is MEEFVDVAIEAAKKAGEIIRHGFYKSKHIEHKGVVDLVTETDKACEVLIFNHLKQCFPSHKFIGEETTAAASGNFELTDEPTWIVDPLDGTTNFVHGFPFVCVSIGLTIEKKPVVGVVYNPIIDELFTAIYGRGAFLNGKSIRVSSESQLVKALVATEVGTNRDKAIVDATTGRINRVIFKVRSLRMSGSCALNLCGVACGRLDLFYEIEFGGPWDVAAGALIVIEAGGLVLDPSGSEFDLTARRVAATNAHLKDAFINALNESE.

Mg(2+) contacts are provided by glutamate 65, aspartate 86, leucine 88, and aspartate 89. Glutamate 65 contacts substrate. Substrate contacts are provided by residues 88-91 (LDGT), 189-191 (GSC), glutamate 208, and aspartate 216. Aspartate 216 serves as a coordination point for Mg(2+).

It belongs to the inositol monophosphatase superfamily. Mg(2+) serves as cofactor. In terms of tissue distribution, low expression in roots, stems, leaves, flowers and young and mature green fruits. Expressed in the stem/leaf junctions, below the shoot apex and on the abaxial side of the petiole of the first expanded leaflets.

The catalysed reaction is a myo-inositol phosphate + H2O = myo-inositol + phosphate. The protein operates within polyol metabolism; myo-inositol biosynthesis; myo-inositol from D-glucose 6-phosphate: step 2/2. Its function is as follows. Responsible for the provision of inositol required for synthesis of phosphatidylinositol and polyphosphoinositides. This chain is Inositol monophosphatase 2 (IMP2), found in Solanum lycopersicum (Tomato).